Here is a 469-residue protein sequence, read N- to C-terminus: uncharacterized protein (469 aa).

Disordered regions lie at residues arginine 248 to serine 314 and glutamine 327 to threonine 418. 2 stretches are compositionally biased toward polar residues: residues glutamate 292–serine 305 and threonine 350–valine 365. Residues threonine 366–serine 377 show a composition bias toward low complexity.

This is an uncharacterized protein from Cryphonectria parasitica (Chestnut blight fungus).